We begin with the raw amino-acid sequence, 280 residues long: Cis-2,3-dihydrobiphenyl-2,3-diol dehydrogenase (280 aa).

9-33 (LVTGGCAGLGRAIVDRFVCEGARVA) provides a ligand contact to NAD(+). Serine 142 contributes to the substrate binding site. Tyrosine 155 serves as the catalytic Proton acceptor.

It belongs to the short-chain dehydrogenases/reductases (SDR) family.

The catalysed reaction is (2R,3S)-3-phenylcyclohexa-3,5-diene-1,2-diol + NAD(+) = biphenyl-2,3-diol + NADH + H(+). The protein operates within xenobiotic degradation; biphenyl degradation; 2-hydroxy-2,4-pentadienoate and benzoate from biphenyl: step 2/4. The chain is Cis-2,3-dihydrobiphenyl-2,3-diol dehydrogenase (bphB) from Rhodococcus globerulus.